The primary structure comprises 428 residues: Chaperone SurA (428 aa).

The N-terminal stretch at 1 to 19 (MNIWKTLLLGMLVTGSAVS) is a signal peptide. 2 PpiC domains span residues 170-268 (SVEY…KIED) and 277-377 (VTEV…EVLD).

Its subcellular location is the periplasm. It catalyses the reaction [protein]-peptidylproline (omega=180) = [protein]-peptidylproline (omega=0). In terms of biological role, chaperone involved in the correct folding and assembly of outer membrane proteins. Recognizes specific patterns of aromatic residues and the orientation of their side chains, which are found more frequently in integral outer membrane proteins. May act in both early periplasmic and late outer membrane-associated steps of protein maturation. This Vibrio vulnificus (strain CMCP6) protein is Chaperone SurA.